The following is a 117-amino-acid chain: Large ribosomal subunit protein bL20 (117 aa).

Belongs to the bacterial ribosomal protein bL20 family.

Binds directly to 23S ribosomal RNA and is necessary for the in vitro assembly process of the 50S ribosomal subunit. It is not involved in the protein synthesizing functions of that subunit. This is Large ribosomal subunit protein bL20 from Rickettsia africae (strain ESF-5).